Here is a 37-residue protein sequence, read N- to C-terminus: MKVRASVKPICKDCKIIKRHQIVRVICKTQKHKQRQG.

This sequence belongs to the bacterial ribosomal protein bL36 family.

The chain is Large ribosomal subunit protein bL36 from Mycoplasma pneumoniae (strain ATCC 29342 / M129 / Subtype 1) (Mycoplasmoides pneumoniae).